The chain runs to 347 residues: Probable E3 ubiquitin-protein ligase DTX3 (347 aa).

Residues 113–157 are disordered; sequence EHPEMHRAGPPPLRAAPLLPPGARGLPPPPPPLPPPLPPRLREEA. Residues 121–151 show a composition bias toward pro residues; it reads GPPPLRAAPLLPPGARGLPPPPPPLPPPLPP. An RING-type zinc finger spans residues 164–205; that stretch reads CPICLGEIQNAKTLEKCRHSFCEGCITRALQVKKACPMCGRF.

It belongs to the Deltex family. In terms of assembly, homodimer. May form a heterodimers with other members of the Deltex family. Interacts with NOTCH1.

The protein resides in the cytoplasm. The catalysed reaction is S-ubiquitinyl-[E2 ubiquitin-conjugating enzyme]-L-cysteine + [acceptor protein]-L-lysine = [E2 ubiquitin-conjugating enzyme]-L-cysteine + N(6)-ubiquitinyl-[acceptor protein]-L-lysine.. It functions in the pathway protein modification; protein ubiquitination. Regulator of Notch signaling, a signaling pathway involved in cell-cell communications that regulates a broad spectrum of cell-fate determinations. Probably acts both as a positive and negative regulator of Notch, depending on the developmental and cell context. Functions as an ubiquitin ligase protein in vitro, suggesting that it may regulate the Notch pathway via some ubiquitin ligase activity. In Homo sapiens (Human), this protein is Probable E3 ubiquitin-protein ligase DTX3 (DTX3).